Consider the following 254-residue polypeptide: NAD-dependent protein deacetylase 1 (254 aa).

One can recognise a Deacetylase sirtuin-type domain in the interval valine 3 to methionine 252. NAD(+) contacts are provided by alanine 29, threonine 33, phenylalanine 40, arginine 41, glutamine 105, valine 107, aspartate 108, and histidine 123. Position 40 (phenylalanine 40) interacts with nicotinamide. The nicotinamide site is built by valine 107 and aspartate 108. Catalysis depends on histidine 123, which acts as the Proton acceptor. The Zn(2+) site is built by cysteine 131, cysteine 134, cysteine 154, and cysteine 157. 3 residues coordinate NAD(+): threonine 195, serine 196, and asparagine 220.

Belongs to the sirtuin family. Class U subfamily. Zn(2+) serves as cofactor.

It localises to the cytoplasm. The enzyme catalyses N(6)-acetyl-L-lysyl-[protein] + NAD(+) + H2O = 2''-O-acetyl-ADP-D-ribose + nicotinamide + L-lysyl-[protein]. NAD-dependent protein deacetylase which modulates the activities of several enzymes which are inactive in their acetylated form. Deacetylates the N-terminal lysine residue of Alba, the major archaeal chromatin protein and that, in turn, increases Alba's DNA binding affinity, thereby repressing transcription. The sequence is that of NAD-dependent protein deacetylase 1 from Pyrobaculum aerophilum (strain ATCC 51768 / DSM 7523 / JCM 9630 / CIP 104966 / NBRC 100827 / IM2).